Reading from the N-terminus, the 874-residue chain is Coatomer subunit gamma-1 (874 aa).

Over residues 1–11 (MLKKFDKKDEE) the composition is skewed to basic and acidic residues. The segment at 1 to 21 (MLKKFDKKDEESGGGSNPLQH) is disordered. 4 HEAT repeats span residues 64–101 (TEATEAFFAMTKLFQSNDPTLRRMCYLTIKEMSCIAED), 283–320 (KELAPAVSVLQLFCSSPKAALRYAAVRTLNKVAMKHPS), 322–355 (VTACNLDLENLVTDSNRSIATLAITTLLKTGSES), and 356–392 (SIDRLMKQISSFMSEISDEFKVVVVQAISALCQKYPR). T594 is modified (phosphothreonine). The segment at 609 to 874 (RQEIFQEQLA…PVDIILASVG (266 aa)) is interaction with ZNF289/ARFGAP2.

Belongs to the COPG family. In terms of assembly, oligomeric complex that consists of at least the alpha, beta, beta', gamma, delta, epsilon and zeta subunits. Interacts with ZNF289/ARFGAP2 through its C-terminal appendage domain. Interacts with EGFR upon EGF treatment; interaction is essential for regulation of EGF-dependent nuclear transport of EGFR by retrograde trafficking from the Golgi to the ER. The coatomer interacts with KDEL receptors; the interaction is important for retrograde trafficking of KDEL-bearing proteins from the Golgi to the endoplasmic reticulum. Interacts with COPB1. Interacts with TMED10 (via C-terminus). Interacts with TMED2, TMED3, TMED7 and TMED9.

Its subcellular location is the cytoplasm. The protein resides in the cytosol. It localises to the golgi apparatus membrane. It is found in the cytoplasmic vesicle. The protein localises to the COPI-coated vesicle membrane. The coatomer is a cytosolic protein complex that binds to dilysine motifs and reversibly associates with Golgi non-clathrin-coated vesicles, which further mediate biosynthetic protein transport from the ER, via the Golgi up to the trans Golgi network. Coatomer complex is required for budding from Golgi membranes, and is essential for the retrograde Golgi-to-ER transport of dilysine-tagged proteins. In mammals, the coatomer can only be recruited by membranes associated to ADP-ribosylation factors (ARFs), which are small GTP-binding proteins; the complex also influences the Golgi structural integrity, as well as the processing, activity, and endocytic recycling of LDL receptors. Required for limiting lipid storage in lipid droplets. Involved in lipid homeostasis by regulating the presence of perilipin family members PLIN2 and PLIN3 at the lipid droplet surface and promoting the association of adipocyte triglyceride lipase (PNPLA2) with the lipid droplet surface to mediate lipolysis. This chain is Coatomer subunit gamma-1 (Copg1), found in Mus musculus (Mouse).